The primary structure comprises 444 residues: Bifunctional enolase 2/transcriptional activator (444 aa).

2 residues coordinate substrate: His163 and Glu172. The active-site Proton donor is Glu215. Mg(2+) contacts are provided by Asp250, Glu300, and Asp327. Positions 300 and 327 each coordinate substrate. Catalysis depends on Lys352, which acts as the Proton acceptor. Residues 379-382 (SHRS) and Lys403 contribute to the substrate site.

Belongs to the enolase family. Homodimer. Requires Mg(2+) as cofactor.

Its subcellular location is the cytoplasm. It is found in the cytosol. The protein localises to the nucleus. The protein resides in the mitochondrion outer membrane. It carries out the reaction (2R)-2-phosphoglycerate = phosphoenolpyruvate + H2O. The protein operates within carbohydrate degradation; glycolysis; pyruvate from D-glyceraldehyde 3-phosphate: step 4/5. Multifunctional enzyme that acts as an enolase involved in the metabolism and as a positive regulator of cold-responsive gene transcription. Binds to the cis-element the gene promoter of STZ/ZAT10, a zinc finger transcriptional repressor. The polypeptide is Bifunctional enolase 2/transcriptional activator (ENO2) (Arabidopsis thaliana (Mouse-ear cress)).